The primary structure comprises 235 residues: DUP240 protein DFP4 (235 aa).

The Cytoplasmic segment spans residues 1 to 44; it reads MSSELLISNSKPRPEGLRKLCEGETVILPRDITPSKCAYFLKQN. Residues 45–65 form a helical membrane-spanning segment; it reads IVFISYIFIHIIITIILNRLA. Over 66-72 the chain is Extracellular; sequence LSAHGNT. A helical membrane pass occupies residues 73–93; it reads LIIILAALLITISLFLLLLLP. Topologically, residues 94–235 are cytoplasmic; the sequence is YLSCSRYKLR…DKYPEMGVTV (142 aa).

It belongs to the DUP/COS family. As to quaternary structure, interacts according to large scale protein interaction studies with BZZ1, SRB4 and SUA7.

The protein resides in the cell membrane. This chain is DUP240 protein DFP4, found in Saccharomyces cerevisiae (strain ATCC 204508 / S288c) (Baker's yeast).